Reading from the N-terminus, the 327-residue chain is Sugar transporter ERD6-like 9 (327 aa).

Transmembrane regions (helical) follow at residues 26 to 46 (FLVFTTFIIVSASFSFGVALG), 68 to 88 (VFGSLLTFGGMIGALFSATIA), 102 to 122 (VFCISGWLAIALAKNIIWLDL), 125 to 145 (FFVGIGVGLLSYVVPVYIAEI), 152 to 172 (GTFTFSNQLLQNCGVATAYYL), 180 to 200 (IIALIGILPCLIQLVGLFFVP), 260 to 280 (LTIGIGLMLLQQLSGSAGLGY), and 295 to 315 (IGMTVLSIVVVPKAILGLILV).

It belongs to the major facilitator superfamily. Sugar transporter (TC 2.A.1.1) family.

The protein resides in the membrane. Its function is as follows. Sugar transporter. This chain is Sugar transporter ERD6-like 9, found in Arabidopsis thaliana (Mouse-ear cress).